The following is a 431-amino-acid chain: Histidine--tRNA ligase (431 aa).

This sequence belongs to the class-II aminoacyl-tRNA synthetase family. Homodimer.

The protein localises to the cytoplasm. It catalyses the reaction tRNA(His) + L-histidine + ATP = L-histidyl-tRNA(His) + AMP + diphosphate + H(+). The polypeptide is Histidine--tRNA ligase (Neisseria gonorrhoeae (strain ATCC 700825 / FA 1090)).